The sequence spans 392 residues: MFTKRHRITLLFNANKAYDRQVVEGVGEYLQASQSEWDIFIEEDFRARIDKIKDWLGDGVIADFDDKQIEQALADVDVPIVGVGGSYHLAESYPPVHYIATDNYALVESAFLHLKEKGVNRFAFYGLPESSGKRWATEREYAFRQLVAEEKYRGVVYQGLETAPENWQHAQNRLADWLQTLPPQTGIIAVTDARARHILQVCEHLHIPVPEKLCVIGIDNEELTRYLSRVALSSVAQGARQMGYQAAKLLHRLLDKEEMPLQRILVPPVRVIERRSTDYRSLTDPAVIQAMHYIRNHACKGIKVDQVLDAVGISRSNLEKRFKEEVGETIHAMIHAEKLEKARSLLISTTLSINEISQMCGYPSLQYFYSVFKKAYDTTPKEYRDVNSEVML.

In terms of domain architecture, HTH araC/xylS-type spans 288 to 386; the sequence is IQAMHYIRNH…DTTPKEYRDV (99 aa). 2 DNA-binding regions (H-T-H motif) span residues 305–326 and 353–376; these read DQVL…KEEV and INEI…KKAY.

Regulatory protein for the xylBAFGHR operon. In Escherichia coli O157:H7, this protein is Xylose operon regulatory protein (xylR).